We begin with the raw amino-acid sequence, 174 residues long: NADH-quinone oxidoreductase subunit B 2 (174 aa).

[4Fe-4S] cluster-binding residues include C51, C52, C116, and C145.

Belongs to the complex I 20 kDa subunit family. As to quaternary structure, NDH-1 is composed of 14 different subunits. Subunits NuoB, C, D, E, F, and G constitute the peripheral sector of the complex. The cofactor is [4Fe-4S] cluster.

Its subcellular location is the cell inner membrane. It catalyses the reaction a quinone + NADH + 5 H(+)(in) = a quinol + NAD(+) + 4 H(+)(out). Its function is as follows. NDH-1 shuttles electrons from NADH, via FMN and iron-sulfur (Fe-S) centers, to quinones in the respiratory chain. The immediate electron acceptor for the enzyme in this species is believed to be ubiquinone. Couples the redox reaction to proton translocation (for every two electrons transferred, four hydrogen ions are translocated across the cytoplasmic membrane), and thus conserves the redox energy in a proton gradient. The sequence is that of NADH-quinone oxidoreductase subunit B 2 from Thermodesulfovibrio yellowstonii (strain ATCC 51303 / DSM 11347 / YP87).